Reading from the N-terminus, the 716-residue chain is MFTPTICRFDYGQLKVTIETGMMARQATAAVMVIIEGTAVLVTVVAQKEAKPGQTFFPLSVHYQERSYAVGRIPSNFFRRETRPNEGETLTSRLIDRPIRPLFPKDFLNEVQVIATVVSVNPKVNPDIVAMIGASAVLSLSGIPFHEPIGAARVGFINGAYVLNPTPEELKQSDLNLVVAGTKNAVLMVESEANILTEEQMLGAIIFGHEQQQIVIESINDLVKKAGKLKWPFTPKIVDEKLRSCITEEDKKDLSNAYLITDKQERYAKLNEIKTNIIERILKENETVNAEQIQDILYNFEKNLVRQRILKDEPRIDGRDKDMIRALHACTGILPRTHGSALFTRGETQALVTTTLGTSRDLQTIDDLMGERSDSFLFHYNFPPYSVGETGMLGSPKRREIGHARLAKRALMAVMPNIEEFPYTVRVVSEITESNGSSSMASVCGASLALMDAGVPIKSAVAGIAMGLVKEEDKFVVLSDILGDEDHLGDMDFKVAGTSEGITALQMDMKIQGITPEIMQSALHHAKAARLHILSVMNQVISSASSTISQYAPHIYNIKINPEKIKDVIGKGGAVIRALSDETDTKIDISDDGNITIAALSQKSAAFAQQRIEEITANIEVGRIYQGTVTRIADYGAFVSIASAKEGLVHISQIAEGRVEKVTDHLKLKQQVSVKVLEIDRQGRIRLSIKDAIADTSEHKIEDTPVDSSFEESQKQ.

Mg(2+)-binding residues include D486 and D492. Positions 553–612 (PHIYNIKINPEKIKDVIGKGGAVIRALSDETDTKIDISDDGNITIAALSQKSAAFAQQRI) constitute a KH domain. An S1 motif domain is found at 622–690 (GRIYQGTVTR…RQGRIRLSIK (69 aa)).

It belongs to the polyribonucleotide nucleotidyltransferase family. In terms of assembly, component of the RNA degradosome, which is a multiprotein complex involved in RNA processing and mRNA degradation. Mg(2+) is required as a cofactor.

Its subcellular location is the cytoplasm. It catalyses the reaction RNA(n+1) + phosphate = RNA(n) + a ribonucleoside 5'-diphosphate. Involved in mRNA degradation. Catalyzes the phosphorolysis of single-stranded polyribonucleotides processively in the 3'- to 5'-direction. This chain is Polyribonucleotide nucleotidyltransferase, found in Hamiltonella defensa subsp. Acyrthosiphon pisum (strain 5AT).